Reading from the N-terminus, the 284-residue chain is 2-dehydro-3-deoxyphosphooctonate aldolase (284 aa).

It belongs to the KdsA family.

The protein resides in the cytoplasm. It catalyses the reaction D-arabinose 5-phosphate + phosphoenolpyruvate + H2O = 3-deoxy-alpha-D-manno-2-octulosonate-8-phosphate + phosphate. The protein operates within carbohydrate biosynthesis; 3-deoxy-D-manno-octulosonate biosynthesis; 3-deoxy-D-manno-octulosonate from D-ribulose 5-phosphate: step 2/3. It functions in the pathway bacterial outer membrane biogenesis; lipopolysaccharide biosynthesis. The polypeptide is 2-dehydro-3-deoxyphosphooctonate aldolase (Photobacterium profundum (strain SS9)).